The following is a 664-amino-acid chain: Alpha-1,4-glucan:maltose-1-phosphate maltosyltransferase (664 aa).

Alpha-maltose 1-phosphate-binding residues include K261, Q321, and D356. The Nucleophile role is filled by D393. N394 serves as a coordination point for alpha-maltose 1-phosphate. E422 functions as the Proton donor in the catalytic mechanism. Position 533–534 (533–534 (KY)) interacts with alpha-maltose 1-phosphate.

Belongs to the glycosyl hydrolase 13 family. GlgE subfamily. As to quaternary structure, homodimer.

The enzyme catalyses alpha-maltose 1-phosphate + [(1-&gt;4)-alpha-D-glucosyl](n) = [(1-&gt;4)-alpha-D-glucosyl](n+2) + phosphate. In terms of biological role, maltosyltransferase that uses maltose 1-phosphate (M1P) as the sugar donor to elongate linear or branched alpha-(1-&gt;4)-glucans. Is involved in a branched alpha-glucan biosynthetic pathway from trehalose, together with TreS, Mak and GlgB. This chain is Alpha-1,4-glucan:maltose-1-phosphate maltosyltransferase, found in Pseudomonas aeruginosa (strain ATCC 15692 / DSM 22644 / CIP 104116 / JCM 14847 / LMG 12228 / 1C / PRS 101 / PAO1).